Consider the following 317-residue polypeptide: Acetyl-coenzyme A carboxylase carboxyl transferase subunit alpha (317 aa).

Residues 33–294 enclose the CoA carboxyltransferase C-terminal domain; sequence NLDDEITRLQ…KKRLLADLAD (262 aa).

It belongs to the AccA family. In terms of assembly, acetyl-CoA carboxylase is a heterohexamer composed of biotin carboxyl carrier protein (AccB), biotin carboxylase (AccC) and two subunits each of ACCase subunit alpha (AccA) and ACCase subunit beta (AccD).

It localises to the cytoplasm. It catalyses the reaction N(6)-carboxybiotinyl-L-lysyl-[protein] + acetyl-CoA = N(6)-biotinyl-L-lysyl-[protein] + malonyl-CoA. The protein operates within lipid metabolism; malonyl-CoA biosynthesis; malonyl-CoA from acetyl-CoA: step 1/1. In terms of biological role, component of the acetyl coenzyme A carboxylase (ACC) complex. First, biotin carboxylase catalyzes the carboxylation of biotin on its carrier protein (BCCP) and then the CO(2) group is transferred by the carboxyltransferase to acetyl-CoA to form malonyl-CoA. This is Acetyl-coenzyme A carboxylase carboxyl transferase subunit alpha from Histophilus somni (strain 2336) (Haemophilus somnus).